The chain runs to 523 residues: GMP synthase [glutamine-hydrolyzing] (523 aa).

The Glutamine amidotransferase type-1 domain occupies 8–205 (KILILDFGSQ…VVKICGCERN (198 aa)). The active-site Nucleophile is the Cys85. Residues His179 and Glu181 contribute to the active site. Positions 206-398 (WTPENIIEDA…LGLPAEMLNR (193 aa)) constitute a GMPS ATP-PPase domain. Residue 233–239 (SGGVDSS) coordinates ATP.

Homodimer.

It carries out the reaction XMP + L-glutamine + ATP + H2O = GMP + L-glutamate + AMP + diphosphate + 2 H(+). It participates in purine metabolism; GMP biosynthesis; GMP from XMP (L-Gln route): step 1/1. Its function is as follows. Catalyzes the synthesis of GMP from XMP. The sequence is that of GMP synthase [glutamine-hydrolyzing] from Pasteurella multocida (strain Pm70).